A 73-amino-acid polypeptide reads, in one-letter code: MQVLVRDNNVDQAMKALKKKLQREGVFREMKLRNFYEKPSEKRAREKAEAIRRARKLARKRAQREAGIVTAKK.

This sequence belongs to the bacterial ribosomal protein bS21 family.

This Parvibaculum lavamentivorans (strain DS-1 / DSM 13023 / NCIMB 13966) protein is Small ribosomal subunit protein bS21.